The chain runs to 433 residues: Apolipoprotein L5 (433 aa).

Positions 346–433 are disordered; that stretch reads HHRHLPQKAS…GRQAPGRHRQ (88 aa). A compositionally biased stretch (low complexity) spans 359–371; it reads SSSRGRAVRGSRV. Basic residues predominate over residues 422–433; that stretch reads RKGRQAPGRHRQ.

Belongs to the apolipoprotein L family. In terms of tissue distribution, low level of expression; detected in uterus, testis, skeletal muscle and stomach.

It is found in the cytoplasm. In terms of biological role, may affect the movement of lipids in the cytoplasm or allow the binding of lipids to organelles. In Homo sapiens (Human), this protein is Apolipoprotein L5 (APOL5).